The primary structure comprises 322 residues: Ferredoxin--NADP reductase (322 aa).

The FAD site is built by Asp34, Gln42, Tyr47, Val87, Phe120, Asp279, and Thr320.

This sequence belongs to the ferredoxin--NADP reductase type 2 family. As to quaternary structure, homodimer. FAD serves as cofactor.

It carries out the reaction 2 reduced [2Fe-2S]-[ferredoxin] + NADP(+) + H(+) = 2 oxidized [2Fe-2S]-[ferredoxin] + NADPH. The sequence is that of Ferredoxin--NADP reductase from Streptococcus sanguinis (strain SK36).